The primary structure comprises 114 residues: Notch-regulated ankyrin repeat-containing protein (114 aa).

ANK repeat units follow at residues 50 to 79 (EGQTALHQSVIDGNLELVKLLVKFGADIRL) and 83 to 112 (DGWSALHIAAYGGHQDIVLYLITKAKYSSS).

This sequence belongs to the NRARP family. As to quaternary structure, forms a ternary complex with the intracellular domain (ICD) of notch1 and rbpj/suh.

In terms of biological role, promotes loss of intracellular domain (ICD) of Notch1 in embryos. By down-regulating ICD levels, could function as a negative feedback regulator of Notch signaling that attenuates ICD-mediated transcription. Involved in angiogenesis. May be involved in somitogenesis. This is Notch-regulated ankyrin repeat-containing protein (nrarp) from Xenopus tropicalis (Western clawed frog).